Here is a 153-residue protein sequence, read N- to C-terminus: SsrA-binding protein (153 aa).

The interval 129–153 (KREDMKKKDQSREMAQALRERSKSH) is disordered.

The protein belongs to the SmpB family.

It is found in the cytoplasm. Required for rescue of stalled ribosomes mediated by trans-translation. Binds to transfer-messenger RNA (tmRNA), required for stable association of tmRNA with ribosomes. tmRNA and SmpB together mimic tRNA shape, replacing the anticodon stem-loop with SmpB. tmRNA is encoded by the ssrA gene; the 2 termini fold to resemble tRNA(Ala) and it encodes a 'tag peptide', a short internal open reading frame. During trans-translation Ala-aminoacylated tmRNA acts like a tRNA, entering the A-site of stalled ribosomes, displacing the stalled mRNA. The ribosome then switches to translate the ORF on the tmRNA; the nascent peptide is terminated with the 'tag peptide' encoded by the tmRNA and targeted for degradation. The ribosome is freed to recommence translation, which seems to be the essential function of trans-translation. This chain is SsrA-binding protein, found in Geobacter metallireducens (strain ATCC 53774 / DSM 7210 / GS-15).